The sequence spans 277 residues: Diaminopimelate epimerase (277 aa).

Substrate contacts are provided by asparagine 11 and asparagine 65. Cysteine 74 serves as the catalytic Proton donor. Substrate-binding positions include 75 to 76 (GN), asparagine 180, and 198 to 199 (ER). Cysteine 208 (proton acceptor) is an active-site residue. 209–210 (GT) contacts substrate.

The protein belongs to the diaminopimelate epimerase family. As to quaternary structure, homodimer.

The protein resides in the cytoplasm. It catalyses the reaction (2S,6S)-2,6-diaminopimelate = meso-2,6-diaminopimelate. The protein operates within amino-acid biosynthesis; L-lysine biosynthesis via DAP pathway; DL-2,6-diaminopimelate from LL-2,6-diaminopimelate: step 1/1. Catalyzes the stereoinversion of LL-2,6-diaminopimelate (L,L-DAP) to meso-diaminopimelate (meso-DAP), a precursor of L-lysine and an essential component of the bacterial peptidoglycan. The protein is Diaminopimelate epimerase of Gemmatimonas aurantiaca (strain DSM 14586 / JCM 11422 / NBRC 100505 / T-27).